The chain runs to 556 residues: Glutamine--tRNA ligase (556 aa).

The 'HIGH' region motif lies at 34–44 (PEPNGYLHIGH). Residues 35–37 (EPN) and 41–47 (HIGHAKS) each bind ATP. L-glutamine-binding residues include D67 and Y212. Residues T231, 263–264 (RL), and 271–273 (MSK) contribute to the ATP site. The short motif at 270–274 (VMSKR) is the 'KMSKS' region element.

The protein belongs to the class-I aminoacyl-tRNA synthetase family. In terms of assembly, monomer.

Its subcellular location is the cytoplasm. It catalyses the reaction tRNA(Gln) + L-glutamine + ATP = L-glutaminyl-tRNA(Gln) + AMP + diphosphate. In Nitrosomonas europaea (strain ATCC 19718 / CIP 103999 / KCTC 2705 / NBRC 14298), this protein is Glutamine--tRNA ligase.